A 500-amino-acid chain; its full sequence is Tektin-like protein 1 (500 aa).

Positions 198-229 (MLTWEKEELKSMKRKMEADMEKSEALLKTLAS) form a coiled coil. Tyr372 carries the post-translational modification Phosphotyrosine. The stretch at 420–444 (DKLQRHISHVEKNLDELLSMRKKLT) forms a coiled coil.

In terms of assembly, microtubule inner protein component of sperm flagellar doublet microtubules.

The protein resides in the cytoplasm. The protein localises to the cytoskeleton. It localises to the flagellum axoneme. Functionally, microtubule inner protein (MIP) part of the dynein-decorated doublet microtubules (DMTs) in sperm flagellar axoneme, which is required for motile flagellum beating. Forms an extensive interaction network cross-linking the lumen of axonemal doublet microtubules. The protein is Tektin-like protein 1 of Bos taurus (Bovine).